Reading from the N-terminus, the 293-residue chain is 4-diphosphocytidyl-2-C-methyl-D-erythritol kinase (293 aa).

K16 is an active-site residue. 99 to 109 lines the ATP pocket; sequence PMGAGLGGGSS. D141 is an active-site residue.

This sequence belongs to the GHMP kinase family. IspE subfamily.

The catalysed reaction is 4-CDP-2-C-methyl-D-erythritol + ATP = 4-CDP-2-C-methyl-D-erythritol 2-phosphate + ADP + H(+). Its pathway is isoprenoid biosynthesis; isopentenyl diphosphate biosynthesis via DXP pathway; isopentenyl diphosphate from 1-deoxy-D-xylulose 5-phosphate: step 3/6. Catalyzes the phosphorylation of the position 2 hydroxy group of 4-diphosphocytidyl-2C-methyl-D-erythritol. The sequence is that of 4-diphosphocytidyl-2-C-methyl-D-erythritol kinase from Burkholderia orbicola (strain MC0-3).